A 234-amino-acid polypeptide reads, in one-letter code: Sugar fermentation stimulation protein A (234 aa).

Residues 201-220 (LLSEAQQRGVEILAYKAEIS) constitute a DNA-binding region (H-T-H motif).

The protein belongs to the SfsA family.

Binds to DNA non-specifically. Could be a regulatory factor involved in maltose metabolism. This is Sugar fermentation stimulation protein A from Shigella sonnei (strain Ss046).